A 480-amino-acid chain; its full sequence is Glutamate--tRNA ligase (480 aa).

The 'HIGH' region motif lies at 21-31; the sequence is PSPTGYLHVGG. Zn(2+)-binding residues include Cys-110, Cys-112, Cys-137, and His-139. The short motif at 248-252 is the 'KMSKS' region element; the sequence is KLSKR. Lys-251 lines the ATP pocket.

The protein belongs to the class-I aminoacyl-tRNA synthetase family. Glutamate--tRNA ligase type 1 subfamily. In terms of assembly, monomer. It depends on Zn(2+) as a cofactor.

It localises to the cytoplasm. It carries out the reaction tRNA(Glu) + L-glutamate + ATP = L-glutamyl-tRNA(Glu) + AMP + diphosphate. Functionally, catalyzes the attachment of glutamate to tRNA(Glu) in a two-step reaction: glutamate is first activated by ATP to form Glu-AMP and then transferred to the acceptor end of tRNA(Glu). The protein is Glutamate--tRNA ligase of Histophilus somni (strain 2336) (Haemophilus somnus).